A 526-amino-acid chain; its full sequence is Acid-sensing ion channel 1 (526 aa).

The Cytoplasmic portion of the chain corresponds to 1-49 (MELKTEEEEVGGVQPVSIQAFASSSTLHGLAHIFSYERLSLKRALWALC). The chain crosses the membrane as a helical span at residues 50 to 66 (FLGSLAVLLCVCTERVQ). The Extracellular portion of the chain corresponds to 67-425 (YYFCYHHVTK…ETIEQKKAYE (359 aa)). 7 disulfides stabilise this stretch: cysteine 93–cysteine 194, cysteine 172–cysteine 179, cysteine 290–cysteine 365, cysteine 308–cysteine 361, cysteine 312–cysteine 359, cysteine 321–cysteine 343, and cysteine 323–cysteine 335. N-linked (GlcNAc...) asparagine glycosylation is found at asparagine 366 and asparagine 393. A discontinuously helical transmembrane segment spans residues 426–456 (IAGLLGDIGGQMGLFIGASILTVLELFDYAY). The GAS motif; ion selectivity filter signature appears at 442–444 (GAS). Topologically, residues 457–526 (EVIKHRLCRR…ARGTFEDFTC (70 aa)) are cytoplasmic. Residue serine 477 is modified to Phosphoserine; by PKA. Serine 497 bears the Phosphoserine mark.

This sequence belongs to the amiloride-sensitive sodium channel (TC 1.A.6) family. ASIC1 subfamily. In terms of assembly, homotrimer. Heterotrimer; with other ASIC proteins producing channel with different properties. Interacts with PICK1; regulates ASIC1 clustering in membranes. Interacts with STOM; alters heterotrimeric ASIC channels activity. In terms of processing, pH-gating could be regulated by serine proteases. Post-translationally, phosphorylation by PKA regulates interaction with PICK1 and subcellular localization. Phosphorylation by PKC may regulate the channel. In terms of tissue distribution, expressed in brain areas receiving strong excitatory corticofugal input. In hippocampus, expressed in the hilus of the dentate gyrus. In the cerebral cortex expressed in anterior and posterior cingulate cortex, sensory and motor cortices. In the sensory cortex strongest expression is detected in the whisker barrel field. In sensorimotor and cingulate cortex expression is elevated in layer III. Also expressed in basal ganglia, striatum, ventral pallidum, olfactory tubercle, and nucleus accumbens. Weakly expressed in thalamus with the exception of the habenula and the medial septal nuclei. In olfactory bulb, preferentially expressed in the glomerular layer, within glomeruli. Expressed in cerebellum in the molecular and granule cell layers. Strongly expressed in amygdala complex, particularly in the lateral and basolateral nuclei. Isoform 1 is more abundant in brain compared to isoform 2 (at protein level). Expressed in the nodose ganglion and dorsal root ganglion. Expressed in dendritic spine cells.

Its subcellular location is the cell membrane. It is found in the postsynaptic cell membrane. The protein localises to the cell projection. The protein resides in the dendrite. The catalysed reaction is Na(+)(in) = Na(+)(out). It carries out the reaction Ca(2+)(in) = Ca(2+)(out). The enzyme catalyses K(+)(in) = K(+)(out). It catalyses the reaction Li(+)(in) = Li(+)(out). With respect to regulation, inhibited by the diuretic drug amiloride. Its activity is regulated as follows. The activity of the channel is sensitive to rapid decrease in osmotic pressure. Its function is as follows. Forms voltage-independent, pH-gated trimeric sodium channels that act as postsynaptic excitatory receptors in the nervous system, playing a crucial role in regulating synaptic plasticity, learning, and memory. Upon extracellular pH drop this channel elicits transient, fast activating, and completely desensitizing inward currents. Displays high selectivity for sodium ions but can also permit the permeation of other cations. Regulates more or less directly intracellular calcium concentration and CaMKII phosphorylation, and thereby the density of dendritic spines. Modulates neuronal activity in the circuits underlying innate fear. Has high selectivity for sodium ions but is also potentially permeable to other cations including potassium. Could function in cochlear mechanoelectrical transduction. This is Acid-sensing ion channel 1 from Mus musculus (Mouse).